A 77-amino-acid polypeptide reads, in one-letter code: Sec-independent protein translocase protein TatA (77 aa).

A helical membrane pass occupies residues 1–21; the sequence is MGGLSIWHWLIVLLIVALVFG. Residues 40–77 are disordered; it reads KDGMREGEAPADPQQLPRSGSVNVDAKDATRSSDSNKA. The span at 64 to 77 shows a compositional bias: basic and acidic residues; it reads DAKDATRSSDSNKA.

This sequence belongs to the TatA/E family. In terms of assembly, the Tat system comprises two distinct complexes: a TatABC complex, containing multiple copies of TatA, TatB and TatC subunits, and a separate TatA complex, containing only TatA subunits. Substrates initially bind to the TatABC complex, which probably triggers association of the separate TatA complex to form the active translocon.

It is found in the cell inner membrane. Its function is as follows. Part of the twin-arginine translocation (Tat) system that transports large folded proteins containing a characteristic twin-arginine motif in their signal peptide across membranes. TatA could form the protein-conducting channel of the Tat system. In Burkholderia thailandensis (strain ATCC 700388 / DSM 13276 / CCUG 48851 / CIP 106301 / E264), this protein is Sec-independent protein translocase protein TatA.